The chain runs to 461 residues: Serine incorporator 5 (461 aa).

The Extracellular segment spans residues 1 to 36 (MSARCCAGQLACCCGSAGCSLCCGCCPKFRQSRTTR). Residues 37–57 (FMYLFYFILVIALCCVMMTPS) form a helical membrane-spanning segment. Over 58–90 (VMKQVKDHIPFFEEFCKKTQAGGDACENLVGYS) the chain is Cytoplasmic. The helical transmembrane segment at 91-111 (AVYRVCFGMACFFALFCLLTL) threads the bilayer. Residues 112 to 125 (KVNNSKSCRAYIHN) lie on the Extracellular side of the membrane. Asn-114 is a glycosylation site (N-linked (GlcNAc...) asparagine). A helical membrane pass occupies residues 126 to 146 (GFWFFKLLLLGAMCSGAFFIP). Residues 147–157 (DQETFLKVWRY) are Cytoplasmic-facing. Residues 158–178 (VGAGGSFLFICIQLLLIVQFA) form a helical membrane-spanning segment. The Extracellular segment spans residues 179-200 (HKWNKNWTAGTVRNKLWYASLS). A glycan (N-linked (GlcNAc...) asparagine) is linked at Asn-184. A helical membrane pass occupies residues 201-221 (LVTLIMYSVAVGGLALMAVFY). At 222–231 (TQWDDCMDNK) the chain is on the cytoplasmic side. A helical transmembrane segment spans residues 232-252 (ILLGVHGGLCVLISLVAISPC). The Extracellular segment spans residues 253–260 (VQNRQPHS). A helical membrane pass occupies residues 261 to 281 (GLLQSGLISCYVTYLTFSALT). Residues 282–312 (SKPEKKVLDEHGKNVTICAPDFGQDLHRDEN) are Cytoplasmic-facing. A helical transmembrane segment spans residues 313-333 (MVTWLGTLLLIVCISYSCLTS). The Extracellular segment spans residues 334-392 (TTRSSSDALQSRYGAPELEVARCCFCFGPDGEDTEEQQNVKKGPRVIYDEKKGTVYSYS). A helical transmembrane segment spans residues 393–413 (YFHFVFFLASLYVMMTLTSWF). The Cytoplasmic portion of the chain corresponds to 414 to 422 (HYENATIKT). Residues 423 to 443 (FFSGWSVFWVKMASCWMCVLL) form a helical membrane-spanning segment. Topologically, residues 444–461 (YLQTLVAPLCCPSRQFSV) are extracellular.

It belongs to the TDE1 family.

The protein localises to the cell membrane. It catalyses the reaction a 1,2-diacyl-sn-glycero-3-phospho-L-serine(in) = a 1,2-diacyl-sn-glycero-3-phospho-L-serine(out). It carries out the reaction a 1,2-diacyl-sn-glycero-3-phosphocholine(in) = a 1,2-diacyl-sn-glycero-3-phosphocholine(out). The catalysed reaction is a 1,2-diacyl-sn-glycero-3-phosphoethanolamine(in) = a 1,2-diacyl-sn-glycero-3-phosphoethanolamine(out). Functionally, restriction factor required to restrict infectivity of gammaretroviruses: acts by inhibiting an early step of viral infection. Impairs the penetration of the viral particle into the cytoplasm. Non-ATP-dependent, non-specific lipid transporter for phosphatidylserine, phosphatidylcholine, and phosphatidylethanolamine. Functions as a scramblase that flips lipids in both directions across the membrane. Phospholipid scrambling results in gammaretroviral surface exposure of phosphatidylserine and loss of membrane asymmetry, which leads to loss of infectivity. Enhances the incorporation of serine into phosphatidylserine and sphingolipids. May play a role in providing serine molecules for the formation of myelin glycosphingolipids in oligodendrocytes. The polypeptide is Serine incorporator 5 (Serinc5) (Mus musculus (Mouse)).